Here is a 626-residue protein sequence, read N- to C-terminus: Basic helix-loop-helix ARNT-like protein 1 (626 aa).

Positions 1–60 are disordered; that stretch reads MADQRMDISSTISDFMSPGPTDLLSSSLGTSGVDCNRKRKGSSTDYQESMDTDKDDPHGR. Phosphoserine; by GSK3-beta is present on S17. Residues 17–32 are compositionally biased toward low complexity; that stretch reads SPGPTDLLSSSLGTSG. T21 carries the phosphothreonine; by GSK3-beta modification. The Nuclear localization signal signature appears at 36–41; that stretch reads NRKRKG. Over residues 51–60 the composition is skewed to basic and acidic residues; sequence DTDKDDPHGR. The region spanning 72–125 is the bHLH domain; sequence NAREAHSQIEKRRRDKMNSFIDELASLVPTCNAMSRKLDKLTVLRMAVQHMKTL. S78 bears the Phosphoserine mark. A Phosphoserine; by CK2 modification is found at S90. Positions 142–152 match the Nuclear export signal 1 motif; sequence LSDDELKHLIL. One can recognise a PAS 1 domain in the interval 143-215; it reads SDDELKHLIL…EQLSSSDTAP (73 aa). K252 is covalently cross-linked (Glycyl lysine isopeptide (Lys-Gly) (interchain with G-Cter in SUMO2 and SUMO3)). Residue K259 forms a Glycyl lysine isopeptide (Lys-Gly) (interchain with G-Cter in SUMO); alternate linkage. Residue K259 forms a Glycyl lysine isopeptide (Lys-Gly) (interchain with G-Cter in SUMO2); alternate linkage. In terms of domain architecture, PAS 2 spans 326–396; the sequence is PQPAGGDIKV…ECHRQVLQTR (71 aa). A Nuclear export signal 2 motif is present at residues 361-369; it reads LAYLPQELL. A PAC domain is found at 402–445; it reads NCYKFKIKDGSFITLRSRWFSFMNPWTKEVEYIVSTNTVVLANV. Disordered regions lie at residues 458–493 and 511–596; these read ASPH…AGAG and GSSP…PSND. Positions 484 to 493 are enriched in gly residues; it reads IPGGTRAGAG. Residues 508-588 are interaction with CIART; sequence RIRGSSPSSC…ISIDMIDNDQ (81 aa). Low complexity predominate over residues 511–521; that stretch reads GSSPSSCGSSP. K538 is subject to N6-acetyllysine.

In terms of assembly, component of the circadian clock oscillator which includes the CRY1/2 proteins, CLOCK or NPAS2, BMAL1 or BMAL2, CSNK1D and/or CSNK1E, TIMELESS and the PER1/2/3 proteins. Forms a heterodimer with CLOCK. The CLOCK-BMAL1 heterodimer is required for E-box-dependent transactivation, for CLOCK nuclear translocation and degradation, and, for phosphorylation of both CLOCK and BMAL1. Part of a nuclear complex which also includes RACK1 and PRKCA; RACK1 and PRKCA are recruited to the complex in a circadian manner. Interacts with NPAS2. Interacts with EZH2. Interacts with SUMO3. Interacts with SIRT1. Interacts with AHR. Interacts with ID1, ID2 and ID3. Interacts with DDX4. Interacts with OGT. Interacts with EED and SUZ12. Interacts with MTA1. Interacts with CIART. Interacts with HSP90. Interacts with KAT2B and EP300. Interacts with BHLHE40/DEC1 and BHLHE41/DEC2. Interacts with RELB and the interaction is enhanced in the presence of CLOCK. Interacts with PER1, PER2, CRY1 and CRY2 and this interaction requires a translocation to the nucleus. Interaction of the CLOCK-BMAL1 heterodimer with PER or CRY inhibits transcription activation. Interaction of the CLOCK-BMAL1 with CRY1 is independent of DNA but with PER2 is off DNA. The CLOCK-BMAL1 heterodimer interacts with GSK3B. Interacts with KDM5A. Interacts with KMT2A; in a circadian manner. Interacts with UBE3A. Interacts with PRKCG. Interacts with MAGEL2. Interacts with NCOA2. Interacts with THRAP3. The CLOCK-BMAL1 heterodimer interacts with PASD1. Interacts with PASD1. Interacts with USP9X. Interacts with PIWIL2 (via PIWI domain). Interacts with HDAC3. Interacts with HNF4A. In terms of processing, ubiquitinated, leading to its proteasomal degradation. Deubiquitinated by USP9X. O-glycosylated; contains O-GlcNAc. O-glycosylation by OGT prevents protein degradation by inhibiting ubiquitination. It also stabilizes the CLOCK-BMAL1 heterodimer thereby increasing CLOCK-BMAL1-mediated transcription of genes in the negative loop of the circadian clock such as PER1/2/3 and CRY1/2. Post-translationally, acetylated on Lys-538 by CLOCK during the repression phase of the circadian cycle. Acetylation facilitates recruitment of CRY1 protein and initiates the repression phase of the circadian cycle. Acetylated at Lys-538 by KAT5 during the activation phase of the cycle, leading to recruitment of the positive transcription elongation factor b (P-TEFb) and BRD4, followed by productive elongation of circadian transcripts. Deacetylated by SIRT1, which may result in decreased protein stability. In terms of processing, phosphorylated upon dimerization with CLOCK. Phosphorylation enhances the transcriptional activity, alters the subcellular localization and decreases the stability of the CLOCK-BMAL1 heterodimer by promoting its degradation. Phosphorylation shows circadian variations in the liver with a peak between CT10 to CT14. Phosphorylation at Ser-90 by CK2 is essential for its nuclear localization, its interaction with CLOCK and controls CLOCK nuclear entry. Dephosphorylation at Ser-78 is important for dimerization with CLOCK and transcriptional activity. Sumoylated on Lys-259 upon dimerization with CLOCK. Predominantly conjugated to poly-SUMO2/3 rather than SUMO1 and the level of these conjugates undergo rhythmic variation, peaking at CT9-CT12. Sumoylation localizes it exclusively to the PML body and promotes its ubiquitination in the PML body, ubiquitin-dependent proteasomal degradation and the transcriptional activity of the CLOCK-BMAL1 heterodimer. Post-translationally, undergoes lysosome-mediated degradation in a time-dependent manner in the liver. Highly expressed in the suprachiasmatic nucleus (SCN). Also expressed in all other tissues examined including kidney, intestine, liver, heart, spleen, brain, muscle, lung, harderian gland and eye. Low expression in kidney and spleen.

The protein resides in the nucleus. The protein localises to the cytoplasm. Its subcellular location is the PML body. Its function is as follows. Transcriptional activator which forms a core component of the circadian clock. The circadian clock, an internal time-keeping system, regulates various physiological processes through the generation of approximately 24 hour circadian rhythms in gene expression, which are translated into rhythms in metabolism and behavior. It is derived from the Latin roots 'circa' (about) and 'diem' (day) and acts as an important regulator of a wide array of physiological functions including metabolism, sleep, body temperature, blood pressure, endocrine, immune, cardiovascular, and renal function. Consists of two major components: the central clock, residing in the suprachiasmatic nucleus (SCN) of the brain, and the peripheral clocks that are present in nearly every tissue and organ system. Both the central and peripheral clocks can be reset by environmental cues, also known as Zeitgebers (German for 'timegivers'). The predominant Zeitgeber for the central clock is light, which is sensed by retina and signals directly to the SCN. The central clock entrains the peripheral clocks through neuronal and hormonal signals, body temperature and feeding-related cues, aligning all clocks with the external light/dark cycle. Circadian rhythms allow an organism to achieve temporal homeostasis with its environment at the molecular level by regulating gene expression to create a peak of protein expression once every 24 hours to control when a particular physiological process is most active with respect to the solar day. Transcription and translation of core clock components (CLOCK, NPAS2, BMAL1, BMAL2, PER1, PER2, PER3, CRY1 and CRY2) plays a critical role in rhythm generation, whereas delays imposed by post-translational modifications (PTMs) are important for determining the period (tau) of the rhythms (tau refers to the period of a rhythm and is the length, in time, of one complete cycle). A diurnal rhythm is synchronized with the day/night cycle, while the ultradian and infradian rhythms have a period shorter and longer than 24 hours, respectively. Disruptions in the circadian rhythms contribute to the pathology of cardiovascular diseases, cancer, metabolic syndromes and aging. A transcription/translation feedback loop (TTFL) forms the core of the molecular circadian clock mechanism. Transcription factors, CLOCK or NPAS2 and BMAL1 or BMAL2, form the positive limb of the feedback loop, act in the form of a heterodimer and activate the transcription of core clock genes and clock-controlled genes (involved in key metabolic processes), harboring E-box elements (5'-CACGTG-3') within their promoters. The core clock genes: PER1/2/3 and CRY1/2 which are transcriptional repressors form the negative limb of the feedback loop and interact with the CLOCK|NPAS2-BMAL1|BMAL2 heterodimer inhibiting its activity and thereby negatively regulating their own expression. This heterodimer also activates nuclear receptors NR1D1/2 and RORA/B/G, which form a second feedback loop and which activate and repress BMAL1 transcription, respectively. BMAL1 positively regulates myogenesis and negatively regulates adipogenesis via the transcriptional control of the genes of the canonical Wnt signaling pathway. Plays a role in normal pancreatic beta-cell function; regulates glucose-stimulated insulin secretion via the regulation of antioxidant genes NFE2L2/NRF2 and its targets SESN2, PRDX3, CCLC and CCLM. Negatively regulates the mTORC1 signaling pathway; regulates the expression of MTOR and DEPTOR. Controls diurnal oscillations of Ly6C inflammatory monocytes; rhythmic recruitment of the PRC2 complex imparts diurnal variation to chemokine expression that is necessary to sustain Ly6C monocyte rhythms. Regulates the expression of HSD3B2, STAR, PTGS2, CYP11A1, CYP19A1 and LHCGR in the ovary and also the genes involved in hair growth. Plays an important role in adult hippocampal neurogenesis by regulating the timely entry of neural stem/progenitor cells (NSPCs) into the cell cycle and the number of cell divisions that take place prior to cell-cycle exit. Regulates the circadian expression of CIART and KLF11. The CLOCK-BMAL1 heterodimer regulates the circadian expression of SERPINE1/PAI1, VWF, B3, CCRN4L/NOC, NAMPT, DBP, MYOD1, PPARGC1A, PPARGC1B, SIRT1, GYS2, F7, NGFR, GNRHR, BHLHE40/DEC1, ATF4, MTA1, KLF10 and also genes implicated in glucose and lipid metabolism. Promotes rhythmic chromatin opening, regulating the DNA accessibility of other transcription factors. The NPAS2-BMAL1 heterodimer positively regulates the expression of MAOA, F7 and LDHA and modulates the circadian rhythm of daytime contrast sensitivity by regulating the rhythmic expression of adenylate cyclase type 1 (ADCY1) in the retina. The preferred binding motif for the CLOCK-BMAL1 heterodimer is 5'-CACGTGA-3', which contains a flanking adenine nucleotide at the 3-prime end of the canonical 6-nucleotide E-box sequence. CLOCK specifically binds to the half-site 5'-CAC-3', while BMAL1 binds to the half-site 5'-GTGA-3'. The CLOCK-BMAL1 heterodimer also recognizes the non-canonical E-box motifs 5'-AACGTGA-3' and 5'-CATGTGA-3'. Essential for the rhythmic interaction of CLOCK with ASS1 and plays a critical role in positively regulating CLOCK-mediated acetylation of ASS1. Plays a role in protecting against lethal sepsis by limiting the expression of immune checkpoint protein CD274 in macrophages in a PKM2-dependent manner. Regulates the diurnal rhythms of skeletal muscle metabolism via transcriptional activation of genes promoting triglyceride synthesis (DGAT2) and metabolic efficiency (COQ10B). This is Basic helix-loop-helix ARNT-like protein 1 (Bmal1) from Nannospalax galili (Northern Israeli blind subterranean mole rat).